Reading from the N-terminus, the 144-residue chain is Bacilliredoxin SH1478 (144 aa).

This sequence belongs to the bacilliredoxin family.

The protein is Bacilliredoxin SH1478 of Staphylococcus haemolyticus (strain JCSC1435).